A 441-amino-acid polypeptide reads, in one-letter code: Hydroxycinnamoyl-CoA:5-hydroxyanthranilate N-hydroxycinnamoyltransferase HHT1 (441 aa).

Catalysis depends on proton acceptor residues His-158 and Asp-388.

This sequence belongs to the plant acyltransferase family.

It catalyses the reaction 5-hydroxyanthranilate + (E)-4-coumaroyl-CoA = avenanthramide A + CoA. The catalysed reaction is 5-hydroxyanthranilate + (E)-caffeoyl-CoA = avenanthramide C + CoA. In terms of biological role, involved in the biosynthesis of avenanthramide phytoalexins, which are phenolic alkaloids found mainly in oats. Catalyzes the N-acylation of 5-hydroxyanthranilate with 4-coumaroyl-CoA or caffeoyl-CoA as acyl donors, forming avenanthramide A and avenanthramide C, respectively. Does not accept feruloyl-CoA as a substrate. In Avena sativa (Oat), this protein is Hydroxycinnamoyl-CoA:5-hydroxyanthranilate N-hydroxycinnamoyltransferase HHT1.